A 365-amino-acid chain; its full sequence is Isoflavone 4'-O-methyltransferase (365 aa).

Residues 207–210, D231, 231–232, 251–252, and K265 contribute to the S-adenosyl-L-methionine site; these read VAGG, DQ, and DM. H269 functions as the Proton acceptor in the catalytic mechanism.

Belongs to the class I-like SAM-binding methyltransferase superfamily. Cation-independent O-methyltransferase family. COMT subfamily.

It carries out the reaction a 4'-hydroxyisoflavone + S-adenosyl-L-methionine = a 4'-methoxyisoflavone + S-adenosyl-L-homocysteine + H(+). The enzyme catalyses (2R,3S)-2,4',7-trihydroxyisoflavanone + S-adenosyl-L-methionine = (2R,3S)-2,7-dihydroxy-4'-methoxyisoflavanone + S-adenosyl-L-homocysteine + H(+). In terms of biological role, 2-hydroxyisoflavanone 4'-O-methyltransferase involved in the biosynthesis of formononetin. Can use 2,7,4'-trihydroxyisoflavanone as substrate, but not daidzein. This is Isoflavone 4'-O-methyltransferase (HI4'OMT) from Lotus japonicus (Lotus corniculatus var. japonicus).